Consider the following 498-residue polypeptide: Glycylpeptide N-tetradecanoyltransferase 2 (498 aa).

Positions 1–87 (MAEDSESAAS…QPPSKNSTIP (87 aa)) are disordered. The segment covering 15 to 32 (ELDDQDTCGIDGDNEEET) has biased composition (acidic residues). Residue S38 is modified to Phosphoserine. The span at 46-57 (KKKKKKQKRKKE) shows a compositional bias: basic residues. The segment covering 61 to 72 (SGGTKSDSASDS) has biased composition (polar residues). Positions 117, 122, 250, 252, 258, 260, 261, and 262 each coordinate tetradecanoyl-CoA.

Belongs to the NMT family.

The protein resides in the cytoplasm. The protein localises to the membrane. It catalyses the reaction N-terminal glycyl-[protein] + tetradecanoyl-CoA = N-tetradecanoylglycyl-[protein] + CoA + H(+). The catalysed reaction is N-terminal glycyl-L-lysyl-[protein] + tetradecanoyl-CoA = N-terminal glycyl-(N(6)-tetradecanoyl)-L-lysyl-[protein] + CoA + H(+). Adds a myristoyl group to the N-terminal glycine residue of certain cellular and viral proteins. Also able to mediate N-terminal lysine myristoylation of proteins: catalyzes myristoylation of ARF6 on both 'Gly-2' and 'Lys-3'. Lysine myristoylation is required to maintain ARF6 on membranes during the GTPase cycle. In Bos taurus (Bovine), this protein is Glycylpeptide N-tetradecanoyltransferase 2 (NMT2).